Consider the following 458-residue polypeptide: Putative long chain fatty acid-CoA ligase VraA (458 aa).

Belongs to the ATP-dependent AMP-binding enzyme family.

The polypeptide is Putative long chain fatty acid-CoA ligase VraA (vraA) (Staphylococcus aureus (strain Mu3 / ATCC 700698)).